A 238-amino-acid polypeptide reads, in one-letter code: Uridylate kinase (238 aa).

Residue 12 to 15 (KLSG) participates in ATP binding. Glycine 54 contributes to the UMP binding site. Positions 55 and 59 each coordinate ATP. UMP contacts are provided by residues aspartate 74 and 135 to 142 (TGNPFFTT). 3 residues coordinate ATP: threonine 162, tyrosine 168, and aspartate 171.

Belongs to the UMP kinase family. Homohexamer.

The protein resides in the cytoplasm. It carries out the reaction UMP + ATP = UDP + ADP. The protein operates within pyrimidine metabolism; CTP biosynthesis via de novo pathway; UDP from UMP (UMPK route): step 1/1. Its activity is regulated as follows. Inhibited by UTP. Catalyzes the reversible phosphorylation of UMP to UDP. In Methylobacillus flagellatus (strain ATCC 51484 / DSM 6875 / VKM B-1610 / KT), this protein is Uridylate kinase.